The primary structure comprises 380 residues: Glucose-1-phosphate adenylyltransferase (380 aa).

Alpha-D-glucose 1-phosphate is bound by residues Gly-164, 179 to 180 (EK), and Ser-190.

This sequence belongs to the bacterial/plant glucose-1-phosphate adenylyltransferase family. In terms of assembly, homotetramer.

It catalyses the reaction alpha-D-glucose 1-phosphate + ATP + H(+) = ADP-alpha-D-glucose + diphosphate. The protein operates within glycan biosynthesis; glycogen biosynthesis. Its function is as follows. Involved in the biosynthesis of ADP-glucose, a building block required for the elongation reactions to produce glycogen. Catalyzes the reaction between ATP and alpha-D-glucose 1-phosphate (G1P) to produce pyrophosphate and ADP-Glc. The protein is Glucose-1-phosphate adenylyltransferase of Lactococcus lactis subsp. cremoris (strain MG1363).